The sequence spans 444 residues: Spermatogenesis-associated protein 1 (444 aa).

A coiled-coil region spans residues 268-403 (SLLKIEREKI…RKLDTDKMKL (136 aa)).

Interacts with IFT20. As to expression, highly abundant in the testis, and is also expressed in the heart and kidney (at protein level).

The protein localises to the cytoplasmic vesicle. It localises to the secretory vesicle. It is found in the acrosome. This is Spermatogenesis-associated protein 1 (Spata1) from Mus musculus (Mouse).